A 168-amino-acid polypeptide reads, in one-letter code: Alpha-N-acetylgalactosamine-specific lectin (168 aa).

The first 18 residues, Met-1–Ala-18, serve as a signal peptide directing secretion. One can recognise a C-type lectin domain in the interval Tyr-38–Lys-163. Disulfide bonds link Cys-59-Cys-162 and Cys-136-Cys-154.

As to quaternary structure, monomer, homodimer and homooligomer.

In terms of biological role, alpha-N-acetylgalactosamine-specific lectin. The oligomeric form has Ca(2+)-dependent hemagglutination activity towards sheep erythrocytes. Its hemagglutination activity is inhibited by various monosaccharides, oligosaccharides and glycopeptides, including inhibition by GalNAc, blood group A trisaccharide, Tn antigen, mucin and asialomucin. This Patiria pectinifera (Starfish) protein is Alpha-N-acetylgalactosamine-specific lectin.